Reading from the N-terminus, the 294-residue chain is Undecaprenyl-diphosphatase (294 aa).

Transmembrane regions (helical) follow at residues 39–59 (PGAAFTAIIQIGTELAVILYF), 93–113 (TQMGWFIIIGTLPILIAGLLF), 123–143 (NLWITVTVLIIFGILLWVVDA), 197–217 (VSFLMAIPAVFGAGILEAVSA), 234–254 (ATIAATIVAFVVGYVVIIGFL), and 265–285 (FAIYRIALAVVVALLLICGVL).

This sequence belongs to the UppP family.

The protein resides in the cell membrane. It carries out the reaction di-trans,octa-cis-undecaprenyl diphosphate + H2O = di-trans,octa-cis-undecaprenyl phosphate + phosphate + H(+). Functionally, catalyzes the dephosphorylation of undecaprenyl diphosphate (UPP). Confers resistance to bacitracin. In Bifidobacterium adolescentis (strain ATCC 15703 / DSM 20083 / NCTC 11814 / E194a), this protein is Undecaprenyl-diphosphatase.